We begin with the raw amino-acid sequence, 1485 residues long: DNA topoisomerase 2 (1485 aa).

Over residues 1–16 the composition is skewed to acidic residues; sequence MSIDADFSDYEDEASG. The interval 1-76 is disordered; that stretch reads MSIDADFSDY…NGNGNSNVST (76 aa). Polar residues predominate over residues 46-59; it reads DLRQTSLTSMTASE. Low complexity predominate over residues 64–76; that stretch reads VTNNGNGNSNVST. ATP is bound by residues Asn136, Asn165, 193–195, and 206–213; these read SSN and GRNGYGAK. The segment at 388 to 392 is interaction with DNA; sequence KKENK. 421–423 contributes to the ATP binding site; it reads QTK. The 115-residue stretch at 499–613 folds into the Toprim domain; that stretch reads CVLILTEGDS…SLLQIPGFLI (115 aa). Positions 505, 582, and 584 each coordinate Mg(2+). Positions 745-1195 constitute a Topo IIA-type catalytic domain; sequence IPSVVDGLKP…TPKELWLHDL (451 aa). Catalysis depends on Tyr835, which acts as the O-(5'-phospho-DNA)-tyrosine intermediate. Residues 1019–1028 form an interaction with DNA region; sequence KLSRTQATSN. The span at 1216–1225 shows a compositional bias: basic and acidic residues; it reads EEQSSRDFVN. The tract at residues 1216 to 1485 is disordered; the sequence is EEQSSRDFVN…EDVDDYDESD (270 aa). The segment covering 1226 to 1242 has biased composition (basic residues); the sequence is RTKKKPRGKSTGTRKPR. The span at 1260-1273 shows a compositional bias: polar residues; the sequence is ESKPSTTNRKQQTL. Residues 1278–1307 are compositionally biased toward basic and acidic residues; the sequence is ASKEPEKSSDINIVKTEDNSHGLSVEENRI. Phosphoserine occurs at positions 1310 and 1345. Residues 1387–1396 show a composition bias toward basic residues; that stretch reads AKNKGKKASS. Residues 1413-1425 are compositionally biased toward polar residues; that stretch reads GSSSTPKASSTNA. Ser1433 is modified (phosphoserine). Positions 1473 to 1485 are enriched in acidic residues; it reads DNDEDVDDYDESD.

This sequence belongs to the type II topoisomerase family. In terms of assembly, homodimer. It depends on Mg(2+) as a cofactor. Mn(2+) serves as cofactor. Ca(2+) is required as a cofactor. In terms of processing, phosphorylated at multiple sites at both extremities of the protein.

It is found in the nucleus. It carries out the reaction ATP-dependent breakage, passage and rejoining of double-stranded DNA.. In terms of biological role, control of topological states of DNA by transient breakage and subsequent rejoining of DNA strands. Topoisomerase II makes double-strand breaks. In Schizosaccharomyces pombe (strain 972 / ATCC 24843) (Fission yeast), this protein is DNA topoisomerase 2 (top2).